The sequence spans 161 residues: MTSKAIYPGTFDPMTNGHLDLVTRASLMFDHVILAIAASPSKKPLFSLDERVALATQVTSHLDNVEVLGFSELMAHFAAHQNANILVRGLRAVSDFEYELQLANMNRHLMPTLESVFLMPSEEWSFISSSLVKEVARHGGDIAPFLPDVVTQALMAKLAAA.

Residue threonine 10 coordinates substrate. Residues 10–11 (TF) and histidine 18 contribute to the ATP site. Substrate contacts are provided by lysine 42, methionine 74, and arginine 88. Residues 89 to 91 (GLR), glutamate 99, and 124 to 130 (WSFISSS) contribute to the ATP site.

This sequence belongs to the bacterial CoaD family. In terms of assembly, homohexamer. Requires Mg(2+) as cofactor.

Its subcellular location is the cytoplasm. The enzyme catalyses (R)-4'-phosphopantetheine + ATP + H(+) = 3'-dephospho-CoA + diphosphate. It participates in cofactor biosynthesis; coenzyme A biosynthesis; CoA from (R)-pantothenate: step 4/5. Its function is as follows. Reversibly transfers an adenylyl group from ATP to 4'-phosphopantetheine, yielding dephospho-CoA (dPCoA) and pyrophosphate. This is Phosphopantetheine adenylyltransferase from Serratia marcescens.